The following is a 165-amino-acid chain: Protein OPG091 (165 aa).

This sequence belongs to the orthopoxvirus OPG091 family.

Its subcellular location is the virion. It localises to the host cytoplasm. Its function is as follows. Contributes to vaccinia virus virulence in mice but not to replication in cell culture. This Homo sapiens (Human) protein is Protein OPG091 (OPG091).